A 393-amino-acid chain; its full sequence is S-adenosylmethionine synthase 2 (393 aa).

A Mg(2+)-binding site is contributed by glutamate 9. Histidine 15 serves as a coordination point for ATP. A K(+)-binding site is contributed by glutamate 43. Glutamate 56 and glutamine 99 together coordinate L-methionine. ATP is bound by residues aspartate 167 to lysine 169, serine 235 to phenylalanine 238, aspartate 246, arginine 252 to lysine 253, alanine 269, lysine 273, and lysine 277. Position 246 (aspartate 246) interacts with L-methionine. Lysine 277 contacts L-methionine.

It belongs to the AdoMet synthase family. Homotetramer. Mn(2+) serves as cofactor. It depends on Mg(2+) as a cofactor. Co(2+) is required as a cofactor. The cofactor is K(+). Requires NH4(+) as cofactor. As to expression, mostly expressed in roots, and, to a lower extent, in hypocotyls and cotyledons.

It localises to the cytoplasm. The catalysed reaction is L-methionine + ATP + H2O = S-adenosyl-L-methionine + phosphate + diphosphate. It functions in the pathway amino-acid biosynthesis; S-adenosyl-L-methionine biosynthesis; S-adenosyl-L-methionine from L-methionine: step 1/1. With respect to regulation, inhibited by products of SAMS reaction (SAM, Pi, PPi), substrate analogs (cycloleucine and ethionine), and alternative nucleotides (GTP, CTP and ADP). Strongly repressed by PPPi. Its function is as follows. Catalyzes the formation of S-adenosylmethionine from methionine and ATP. The reaction comprises two steps that are both catalyzed by the same enzyme: formation of S-adenosylmethionine (AdoMet) and triphosphate, and subsequent hydrolysis of the triphosphate. This Catharanthus roseus (Madagascar periwinkle) protein is S-adenosylmethionine synthase 2 (SAMS2).